A 219-amino-acid polypeptide reads, in one-letter code: NADH-quinone oxidoreductase subunit C (219 aa).

This sequence belongs to the complex I 30 kDa subunit family. NDH-1 is composed of 14 different subunits. Subunits NuoB, C, D, E, F, and G constitute the peripheral sector of the complex.

The protein localises to the cell inner membrane. The catalysed reaction is a quinone + NADH + 5 H(+)(in) = a quinol + NAD(+) + 4 H(+)(out). Its function is as follows. NDH-1 shuttles electrons from NADH, via FMN and iron-sulfur (Fe-S) centers, to quinones in the respiratory chain. The immediate electron acceptor for the enzyme in this species is believed to be ubiquinone. Couples the redox reaction to proton translocation (for every two electrons transferred, four hydrogen ions are translocated across the cytoplasmic membrane), and thus conserves the redox energy in a proton gradient. This Methylorubrum extorquens (strain PA1) (Methylobacterium extorquens) protein is NADH-quinone oxidoreductase subunit C.